Reading from the N-terminus, the 119-residue chain is Large ribosomal subunit protein bL20 (119 aa).

It belongs to the bacterial ribosomal protein bL20 family.

Functionally, binds directly to 23S ribosomal RNA and is necessary for the in vitro assembly process of the 50S ribosomal subunit. It is not involved in the protein synthesizing functions of that subunit. This Buchnera aphidicola subsp. Cinara cedri (strain Cc) protein is Large ribosomal subunit protein bL20.